The following is a 664-amino-acid chain: E3 ubiquitin-protein ligase RNF139 (664 aa).

N-acetylalanine is present on Ala-2. The next 12 membrane-spanning stretches (helical) occupy residues 51–71, 85–105, 125–145, 154–174, 178–198, 293–313, 323–343, 356–376, 390–410, 420–440, 469–489, and 495–512; these read IVLQ…VLIL, AFLL…HIDF, SLWM…VTLL, LIIL…PLHI, LVFT…AVKL, GMSA…LAFI, LGFV…LSGL, MCLL…PVLM, FPVL…SYVL, LFAA…SLTV, SIIV…TMMF, and IRAF…YLQA. An RING-type; atypical zinc finger spans residues 547–586; that stretch reads CAICYHEFTTSARITPCNHYFHALCLRKWLYIQDTCPMCH. Residues 599 to 610 show a composition bias toward polar residues; that stretch reads SNVSNNNGFTPP. Residues 599–664 are disordered; it reads SNVSNNNGFT…AAEEFNDDTD (66 aa). The span at 616–628 shows a compositional bias: basic and acidic residues; it reads EAVREAAAESDRE. A compositionally biased stretch (acidic residues) spans 629–639; it reads LNEDDSTDCDD. Ser-634 carries the post-translational modification Phosphoserine. Phosphothreonine is present on residues Thr-635 and Thr-663.

As to quaternary structure, interacts with VHL. Interacts with MHC class I and HM13. Component of SCAP-SREBP complex composed of SREBF2, SCAP and RNF139; the complex hampers the interaction between SCAP and SEC24B, thereby reducing SREBF2 proteolytic processing. Interacts with SREBF2 (via C-terminal domain). Interacts with SCAP; the interaction inhibits the interaction of SCAP with SEC24B and hampering the ER to Golgi transport of the SCAP-SREBP complex. Interacts with SEC24B. Interacts with INSIG1 and INSIG2. Interacts with EIF3F and EIF3H; the interaction leads to protein translation inhibitions in a ubiquitination-dependent manner. Interacts with XBP1; the interaction induces ubiquitination and degradation of XBP1. Interacts with AUP1, AMFR and UBE2G2; interaction with AUP1 facilitates interaction of RNF139 with ubiquitin-conjugating enzyme UBE2G2 and ubiquitin ligase AMFR/gp78, leading to sterol-induced ubiquitination of HMGCR and its subsequent proteasomal degradation. Autoubiquitinated. Ubiquitination is induced by sterol and leads to ist degradation via the ubiquitin-proteasome pathway.

It is found in the endoplasmic reticulum membrane. It catalyses the reaction S-ubiquitinyl-[E2 ubiquitin-conjugating enzyme]-L-cysteine + [acceptor protein]-L-lysine = [E2 ubiquitin-conjugating enzyme]-L-cysteine + N(6)-ubiquitinyl-[acceptor protein]-L-lysine.. It participates in protein modification; protein ubiquitination. Its function is as follows. E3-ubiquitin ligase; acts as a negative regulator of cell proliferation through mechanisms involving G2/M arrest and cell death. Required for MHC class I ubiquitination in cells expressing the cytomegalovirus protein US2 before dislocation from the endoplasmic reticulum (ER). Affects SREBP processing by hindering the SREBP-SCAP complex translocation from the ER to the Golgi, thereby reducing SREBF2 target gene expression. Involved in the sterol-accelerated degradation of HMGCR. This is achieved through binding to INSIG1 and/or INSIG2 at the ER membrane. In addition, interaction of RNF139 with AUP1 facilitates interaction of RNF139 with ubiquitin-conjugating enzyme UBE2G2 and ubiquitin ligase AMFR, leading to ubiquitination of HMGCR. The ubiquitinated HMGCR is then released from the ER by the complex into the cytosol for subsequent destruction. Required for INSIG1 ubiquitination. May be required for EIF3 complex ubiquitination. The protein is E3 ubiquitin-protein ligase RNF139 (RNF139) of Pongo abelii (Sumatran orangutan).